Consider the following 465-residue polypeptide: MSSELMFNYTFSWPAGPKDVILTGTFDDWRGTLPLVKTAKGNFEITMPVKLANKDDTFQFKFIVDGVWCVSDSYKKEHVSEGIENNFLQITDLVETQEVAGASRIPEAGGLLCGKPPRSAGPPSTSNRKKNKRNNKKRRSKLKKKSTKNNKNSNESLDDNEEEDGVTGTTTEDVTGTSREETPLAEPTNVSKEAPGNFHILPIDQSADTTQSNGIIGGPGPVLVPNPGEIKEFTEIRDVDARELNERLNKKEEVPEPVAGPIVESSVTEKSPALPQADDPIVETKEMAHNVQELTPQVEAVTPLINEPEPLPTPEAQISIPESSKVEPVEGSLQSKLVEKRESTEGVLDGSKKVENKAKKDEEVFTLDPIVNKAPKLPLTDEQTAEGRKSPAVSEEKEKKKKQEKGSKEVKRSETSKEKKPSAKEVKKQTVKASKKQTASPLSSSTEEPKKKKTGFFGKLKKLFK.

Disordered stretches follow at residues 107 to 227 and 247 to 275; these read EAGG…VPNP and RLNKKEEVPEPVAGPIVESSVTEKSPALP. A compositionally biased stretch (basic residues) spans 127 to 148; sequence NRKKNKRNNKKRRSKLKKKSTK. Ser153 and Ser156 each carry phosphoserine. The span at 156-165 shows a compositional bias: acidic residues; it reads SLDDNEEEDG. An X-DNA-binding region spans residues 160–161; sequence NE. Residues 166-177 show a composition bias toward low complexity; sequence VTGTTTEDVTGT. Thr182 is subject to Phosphothreonine. A Phosphoserine modification is found at Ser271. Thr295 is subject to Phosphothreonine. A disordered region spans residues 305-465; the sequence is INEPEPLPTP…FFGKLKKLFK (161 aa). Phosphoserine is present on residues Ser319 and Ser343. Residues 337–363 are compositionally biased toward basic and acidic residues; that stretch reads LVEKRESTEGVLDGSKKVENKAKKDEE. Residue Thr366 is modified to Phosphothreonine. 2 stretches are compositionally biased toward basic and acidic residues: residues 385 to 398 and 404 to 428; these read AEGRKSPAVSEEKE and EKGSKEVKRSETSKEKKPSAKEVKK. The residue at position 394 (Ser394) is a Phosphoserine. A Phosphoserine modification is found at Ser440. Basic residues predominate over residues 451–465; the sequence is KKKTGFFGKLKKLFK.

Belongs to the CRP1/MDG1 family. Cleaved in the vicinity of position 160 to give an X-DNA-binding N-terminal subpeptide and a non-DNA-binding C-terminal subpeptide.

Its function is as follows. Cruciform DNA-binding protein which exerts an enhancing effect on the cleavage of cruciform DNA (X-DNA) by endonuclease VII from bacteriophage T4. This Saccharomyces cerevisiae (strain JAY291) (Baker's yeast) protein is Cruciform DNA-recognizing protein 1 (CRP1).